The primary structure comprises 78 residues: D-alanyl carrier protein (78 aa).

One can recognise a Carrier domain in the interval 1 to 78; that stretch reads MAFRENVLEI…MIITQLEALK (78 aa). The residue at position 36 (Ser36) is an O-(pantetheine 4'-phosphoryl)serine.

It belongs to the DltC family. Post-translationally, 4'-phosphopantetheine is transferred from CoA to a specific serine of apo-DCP.

It localises to the cytoplasm. Its pathway is cell wall biogenesis; lipoteichoic acid biosynthesis. Functionally, carrier protein involved in the D-alanylation of lipoteichoic acid (LTA). The loading of thioester-linked D-alanine onto DltC is catalyzed by D-alanine--D-alanyl carrier protein ligase DltA. The DltC-carried D-alanyl group is further transferred to cell membrane phosphatidylglycerol (PG) by forming an ester bond, probably catalyzed by DltD. D-alanylation of LTA plays an important role in modulating the properties of the cell wall in Gram-positive bacteria, influencing the net charge of the cell wall. This Listeria monocytogenes serotype 4a (strain HCC23) protein is D-alanyl carrier protein.